Here is a 424-residue protein sequence, read N- to C-terminus: Imidazolonepropionase (424 aa).

H84 and H86 together coordinate Fe(3+). 2 residues coordinate Zn(2+): H84 and H86. 4-imidazolone-5-propanoate-binding residues include R93, Y156, and H189. Residue Y156 participates in N-formimidoyl-L-glutamate binding. Residue H254 coordinates Fe(3+). A Zn(2+)-binding site is contributed by H254. Residue E257 coordinates 4-imidazolone-5-propanoate. D328 is a binding site for Fe(3+). D328 provides a ligand contact to Zn(2+). N-formimidoyl-L-glutamate contacts are provided by N330 and G332. S333 contacts 4-imidazolone-5-propanoate.

Belongs to the metallo-dependent hydrolases superfamily. HutI family. It depends on Zn(2+) as a cofactor. The cofactor is Fe(3+).

The protein resides in the cytoplasm. It catalyses the reaction 4-imidazolone-5-propanoate + H2O = N-formimidoyl-L-glutamate. It participates in amino-acid degradation; L-histidine degradation into L-glutamate; N-formimidoyl-L-glutamate from L-histidine: step 3/3. Functionally, catalyzes the hydrolytic cleavage of the carbon-nitrogen bond in imidazolone-5-propanoate to yield N-formimidoyl-L-glutamate. It is the third step in the universal histidine degradation pathway. This is Imidazolonepropionase from Geobacillus sp. (strain WCH70).